The chain runs to 209 residues: Ion-translocating oxidoreductase complex subunit G (209 aa).

The helical transmembrane segment at Gly9–Leu29 threads the bilayer. FMN phosphoryl threonine is present on Thr175.

Belongs to the RnfG family. In terms of assembly, the complex is composed of six subunits: RnfA, RnfB, RnfC, RnfD, RnfE and RnfG. FMN is required as a cofactor.

It is found in the cell inner membrane. Its function is as follows. Part of a membrane-bound complex that couples electron transfer with translocation of ions across the membrane. This chain is Ion-translocating oxidoreductase complex subunit G, found in Photorhabdus laumondii subsp. laumondii (strain DSM 15139 / CIP 105565 / TT01) (Photorhabdus luminescens subsp. laumondii).